A 375-amino-acid chain; its full sequence is Aldehyde reductase FrzD (375 aa).

3 residues coordinate FMN: A61, Q103, and H171. Y176 functions as the Proton donor in the catalytic mechanism. Residues K223, G294, and R319 each contribute to the FMN site.

The protein belongs to the NADH:flavin oxidoreductase/NADH oxidase family. Requires FMN as cofactor.

It carries out the reaction (1S,4S)-4-[(4-hydroxyphenyl)methyl]-2,5-diazaspiro[bicyclo[3.2.1]octane-6,1'-cyclohexane]-2',5'-dien-4'-one + 2 NADPH + 2 H(+) = (1S,4S)-4-[(4-hydroxyphenyl)methyl]-2,5-diazaspiro[bicyclo[3.2.1]octane-6,1'-cyclohexan]-4'-one + 2 NADP(+). It functions in the pathway alkaloid biosynthesis; ergot alkaloid biosynthesis. Its function is as follows. Aldehyde reductase; part of the gene cluster that mediates the biosynthesis of the alkaloid (-)-FR901483, a potent immunosuppressant that shows efficacy in animal models and a probable inhibitor of purine nucleotide biosynthesis by targeting phosphoribosylpyrophosphate amidotransferase (PPAT). Within the pathway, FrzD reduces the dienone portion of the pathway intermediates to cyclohexanone. The biosynthesis of (-)-FR901483 starts with the condensation of two L-tyrosines to yield (S,S)-dityrosyl-piperazine. This process occurs in 3 steps with the non-canonical nonribosomal peptide synthetase FrzA catalyzing the reduction of L-tyrosine into L-tyrosinal, the spontaneous condensation of 2 L-tyrosinal units, and the subsequent reduction by the NmrA-like family domain-containing oxidoreductase FrzB. The cytochrome P450 monooxygenase FrzC then performs coupling between N10 and C1' to morph the piperazine into a 1,4-diazabicyclo[3.2.1]octane spiro-fused to a 2,5-cyclohexadienone. The dienone portion is further reduced to cyclohexanone by the flavin-dependent reductase FrzD. The methyltranserases (MTs) FrzE and FrzF are then involved in the methylation at the C10' amine and the C4 phenolic oxygen, respectively. The order of the two MTs appear to be interchangeable. Cleavage of the C9-N10' bond by the dioxygenase FrzG then leads to formation of a conjugated iminium. In addition to the oxidation of C9, an additional dehydrogenation between C7 and C8 can occur to give a likely shunt product. The next biosynthetic step is the intramolecular aldol condensation catalyzed by the newly identified aldolase FrzH to yield an aza-tricyclic product with the formation of a C9-C3' bond. The short-chain dehydrogenase/reductase FrzI then produces dephospho-(-)-FR901483 that is phosphorylated at C4'-OH into (-)-FR901483 by the phosphotransferase FrzJ. The only unassigned enzyme in the cluster is the second cytochrome P450 monooxygenase FrzL. The polypeptide is Aldehyde reductase FrzD (Cladobotryum sp).